A 305-amino-acid polypeptide reads, in one-letter code: Probable cell division protein WhiA (305 aa).

The segment at residues 272 to 305 (SIQQLADSLTVPITKSGVNHRLRKINKIADELTD) is a DNA-binding region (H-T-H motif).

The protein belongs to the WhiA family.

Involved in cell division and chromosome segregation. The polypeptide is Probable cell division protein WhiA (Streptococcus suis (strain 98HAH33)).